We begin with the raw amino-acid sequence, 242 residues long: MMSSSKETAKSLIQTKSRSSIRNMFDEVAPTYDFLNHLLSLGIDNYWRVVAAKKARKQLEGEREPKILDVATGTGDLAASMAKIPGAKVTGYDLSPEMLAIARKKYPNIEFLEGFAEKMPFDDRSFHVVSAGFGVRNFEDLAQGMKEFHRVLKPGGCAYIIEPMIPRNAVMKKLYLIYFKNVLPKIAGMFSKSTFAYDYLPNSVEQFPQAEAFTKILKNAGFKKAEYFPMTFETSILYVAMK.

2 residues coordinate S-adenosyl-L-methionine: Thr-74 and Asp-93.

The protein belongs to the class I-like SAM-binding methyltransferase superfamily. MenG/UbiE family.

It catalyses the reaction a 2-demethylmenaquinol + S-adenosyl-L-methionine = a menaquinol + S-adenosyl-L-homocysteine + H(+). It functions in the pathway quinol/quinone metabolism; menaquinone biosynthesis; menaquinol from 1,4-dihydroxy-2-naphthoate: step 2/2. Functionally, methyltransferase required for the conversion of demethylmenaquinol (DMKH2) to menaquinol (MKH2). In Chlorobaculum tepidum (strain ATCC 49652 / DSM 12025 / NBRC 103806 / TLS) (Chlorobium tepidum), this protein is Demethylmenaquinone methyltransferase.